We begin with the raw amino-acid sequence, 159 residues long: Type-1 angiotensin II receptor-associated protein (159 aa).

Residues 1-23 (MELPAVNLKVILLGHWLLTTWGC) are Extracellular-facing. The chain crosses the membrane as a helical span at residues 24–44 (IVFSGSYAWANFTILALGVWA). Topologically, residues 45–55 (VAQRDSIDAIS) are cytoplasmic. The helical transmembrane segment at 56 to 76 (MFLGGLLATIFLDIVHISIFY) threads the bilayer. Over 77 to 86 (PRVSLTDTGR) the chain is Extracellular. A helical transmembrane segment spans residues 87-107 (FGVGMAILSLLLKPLSCCFVY). Residues 108–159 (HMYRERGGELLVHTGFLGSSQDRSAYQTIDSAEAPADPFAVPEGRSQDARGY) lie on the Cytoplasmic side of the membrane. Residues 110-122 (YRERGGELLVHTG) are interaction with AGTR1. Phosphoserine occurs at positions 126 and 127. Threonine 135 carries the post-translational modification Phosphothreonine. A phosphoserine mark is found at serine 138 and serine 153. Residues 140–159 (EAPADPFAVPEGRSQDARGY) form a disordered region.

As to quaternary structure, interacts with RACK1, and with the C-terminal region of AGTR1. Ubiquitous but more abundant in kidney, heart, pancreas and thyroid.

It localises to the endoplasmic reticulum membrane. Its subcellular location is the golgi apparatus membrane. The protein resides in the cytoplasmic vesicle membrane. Appears to be a negative regulator of type-1 angiotensin II receptor-mediated signaling by regulating receptor internalization as well as mechanism of receptor desensitization such as phosphorylation. Also induces a decrease in cell proliferation and angiotensin II-stimulated transcriptional activity. This chain is Type-1 angiotensin II receptor-associated protein (AGTRAP), found in Homo sapiens (Human).